Reading from the N-terminus, the 42-residue chain is Iota-conotoxin-like R11.16 (42 aa).

4 disulfide bridges follow: Cys-5–Cys-19, Cys-12–Cys-22, Cys-18–Cys-27, and Cys-21–Cys-36.

Belongs to the conotoxin I1 superfamily. As to expression, expressed by the venom duct.

The protein resides in the secreted. Iota-conotoxins bind to voltage-gated sodium channels (Nav) and act as agonists by shifting the voltage-dependence of activation to more hyperpolarized levels. Produces general excitatory symptoms. The chain is Iota-conotoxin-like R11.16 from Conus radiatus (Rayed cone).